Consider the following 467-residue polypeptide: Light-independent protochlorophyllide reductase subunit N (467 aa).

[4Fe-4S] cluster-binding residues include cysteine 23, cysteine 48, and cysteine 108.

This sequence belongs to the BchN/ChlN family. As to quaternary structure, protochlorophyllide reductase is composed of three subunits; ChlL, ChlN and ChlB. Forms a heterotetramer of two ChlB and two ChlN subunits. It depends on [4Fe-4S] cluster as a cofactor.

The enzyme catalyses chlorophyllide a + oxidized 2[4Fe-4S]-[ferredoxin] + 2 ADP + 2 phosphate = protochlorophyllide a + reduced 2[4Fe-4S]-[ferredoxin] + 2 ATP + 2 H2O. Its pathway is porphyrin-containing compound metabolism; chlorophyll biosynthesis (light-independent). Component of the dark-operative protochlorophyllide reductase (DPOR) that uses Mg-ATP and reduced ferredoxin to reduce ring D of protochlorophyllide (Pchlide) to form chlorophyllide a (Chlide). This reaction is light-independent. The NB-protein (ChlN-ChlB) is the catalytic component of the complex. This Nostoc sp. (strain PCC 7120 / SAG 25.82 / UTEX 2576) protein is Light-independent protochlorophyllide reductase subunit N.